The sequence spans 996 residues: Receptor-like protein kinase HSL1 (996 aa).

A signal peptide spans 1–15 (MYLLFLFLLFPTVFS). At 16–618 (LNQDGFILQQ…ENEAKKRGYV (603 aa)) the chain is on the extracellular side. LRR repeat units follow at residues 59–83 (FSSV…ICRL), 84–107 (SNLA…IAAC), 109–131 (SLQT…LADI), 133–154 (TLVH…SFGK), 155–178 (FENL…FLGN), 179–203 (ISTL…EFGN), 205–228 (TNLE…LGQL), 229–252 (SKLV…LGGL), 253–276 (TNVV…LGNL), 278–299 (SLRL…ELCR), 300–323 (VPLE…IALS), 325–347 (NLYE…LGLN), 348–371 (SPLR…LCAK), 373–395 (ELEE…LADC), 396–419 (RSLT…FWGL), 421–443 (HVNL…IGGA), 444–467 (SNLS…IGSL), 468–491 (DNLN…LMSL), 493–515 (ELGT…IKSW), 516–539 (KKLN…IGSL), 541–562 (VLNY…SLQS), and 563–586 (LKLN…LAKD). N-linked (GlcNAc...) asparagine glycosylation is found at asparagine 93 and asparagine 97. 4 N-linked (GlcNAc...) asparagine glycosylation sites follow: asparagine 143, asparagine 178, asparagine 186, and asparagine 203. A glycan (N-linked (GlcNAc...) asparagine) is linked at asparagine 262. N-linked (GlcNAc...) asparagine glycosylation is found at asparagine 429 and asparagine 445. A glycan (N-linked (GlcNAc...) asparagine) is linked at asparagine 569. Residues 619–639 (WLLRSIFVLAAMVLLAGVAWF) form a helical membrane-spanning segment. Over 640-996 (YFKYRTFKKA…EDTSDQGSIA (357 aa)) the chain is Cytoplasmic. In terms of domain architecture, Protein kinase spans 676-962 (LDEDNVIGAG…RRVVKMLQEI (287 aa)). ATP is bound by residues 682-690 (IGAGASGKV) and lysine 704. Phosphotyrosine occurs at positions 764 and 802. The active-site Proton acceptor is aspartate 815. Serine 851 bears the Phosphoserine mark. Phosphotyrosine is present on residues tyrosine 859 and tyrosine 866. Threonine 867 is modified (phosphothreonine). The disordered stretch occupies residues 967–996 (EDSLHKIRDDKDGKLTPYYNEDTSDQGSIA). Residues 968-980 (DSLHKIRDDKDGK) show a composition bias toward basic and acidic residues.

The protein belongs to the protein kinase superfamily. Ser/Thr protein kinase family.

It is found in the cell membrane. The enzyme catalyses L-seryl-[protein] + ATP = O-phospho-L-seryl-[protein] + ADP + H(+). The catalysed reaction is L-threonyl-[protein] + ATP = O-phospho-L-threonyl-[protein] + ADP + H(+). The sequence is that of Receptor-like protein kinase HSL1 (HSL1) from Arabidopsis thaliana (Mouse-ear cress).